The following is a 128-amino-acid chain: MDLIQQLEQEEIARLAKNIPDFAPGDTVVVNVNVVEGTRKRAQAYEGVVISRRNRGLNSNFIVRKISSGEGVERTFQLYSPLIASIEVKRRGDVRRAKLYYLRERSGKSARIKEKLPQRRVAAKQAAE.

It belongs to the bacterial ribosomal protein bL19 family.

Its function is as follows. This protein is located at the 30S-50S ribosomal subunit interface and may play a role in the structure and function of the aminoacyl-tRNA binding site. The chain is Large ribosomal subunit protein bL19 from Janthinobacterium sp. (strain Marseille) (Minibacterium massiliensis).